Here is an 854-residue protein sequence, read N- to C-terminus: Envelope glycoprotein gp150 (854 aa).

The Extracellular segment spans residues 1-783 (MAEGFAANRQ…WIGKIPQYLK (783 aa)). N-linked (GlcNAc...) asparagine; by host glycans are attached at residues N220, N258, N269, N274, N298, N330, N336, N342, N418, N422, N448, N469, N481, N499, N518, N531, N548, and N551. A fusion peptide region spans residues 614–634 (IMLALATVLSIAGAGTGATAI). Residues 641–691 (QQVLATHQEALDKITEALKINNLRLVTLEHQMLVIGLKVEAIEKFLYTAFA) adopt a coiled-coil conformation. An immunosuppression region spans residues 660–678 (INNLRLVTLEHQMLVIGLK). 4 N-linked (GlcNAc...) asparagine; by host glycosylation sites follow: N715, N719, N727, and N735. Positions 734 to 770 (YNQTKYLQQKFYEIIMDIEQNNVQGKQGLQKLQNWQD) form a coiled coil. Residues 784-804 (GLLGGILGIGLGILLLILCLP) traverse the membrane as a helical segment. Topologically, residues 805 to 854 (TLVDCIRNCISKVLGYTVIAMPEIDDEEETVQMELRKNGRQCGMSEKEEE) are cytoplasmic.

The mature envelope protein (Env) consists of a trimer of SU-TM heterodimers attached by non-covalent interactions or by a labile interchain disulfide bond. Specific enzymatic cleavages in vivo yield mature proteins. Envelope glycoproteins are synthesized as an inactive precursor that is N-glycosylated and processed likely by host cell furin or by a furin-like protease in the Golgi to yield the mature SU and TM proteins. The cleavage site between SU and TM requires the minimal sequence [KR]-X-[KR]-R.

The protein resides in the virion membrane. Its subcellular location is the host cell membrane. Functionally, the surface protein (SU) attaches the virus to the host cell by binding to its receptor. This interaction triggers the refolding of the transmembrane protein (TM) and is thought to activate its fusogenic potential by unmasking its fusion peptide. Fusion occurs at the host cell plasma membrane. In terms of biological role, the transmembrane protein (TM) acts as a class I viral fusion protein. Under the current model, the protein has at least 3 conformational states: pre-fusion native state, pre-hairpin intermediate state, and post-fusion hairpin state. During viral and target cell membrane fusion, the coiled coil regions (heptad repeats) assume a trimer-of-hairpins structure, positioning the fusion peptide in close proximity to the C-terminal region of the ectodomain. The formation of this structure appears to drive apposition and subsequent fusion of viral and target cell membranes. Membranes fusion leads to delivery of the nucleocapsid into the cytoplasm. The chain is Envelope glycoprotein gp150 (env) from Feline immunodeficiency virus (strain San Diego) (FIV).